Reading from the N-terminus, the 306-residue chain is 4-diphosphocytidyl-2-C-methyl-D-erythritol kinase (306 aa).

K11 is an active-site residue. 113-123 serves as a coordination point for ATP; it reads PPEGGIGGGSS. The active site involves D153.

The protein belongs to the GHMP kinase family. IspE subfamily.

The enzyme catalyses 4-CDP-2-C-methyl-D-erythritol + ATP = 4-CDP-2-C-methyl-D-erythritol 2-phosphate + ADP + H(+). It participates in isoprenoid biosynthesis; isopentenyl diphosphate biosynthesis via DXP pathway; isopentenyl diphosphate from 1-deoxy-D-xylulose 5-phosphate: step 3/6. Functionally, catalyzes the phosphorylation of the position 2 hydroxy group of 4-diphosphocytidyl-2C-methyl-D-erythritol. This chain is 4-diphosphocytidyl-2-C-methyl-D-erythritol kinase, found in Leptospira biflexa serovar Patoc (strain Patoc 1 / ATCC 23582 / Paris).